The sequence spans 386 residues: GLABROUS1 enhancer-binding protein-like 1 (386 aa).

Disordered regions lie at residues 1–58 (MVTP…KKKK) and 197–314 (ESGE…DDDD). Over residues 216–226 (EEIRDNDETAR) the composition is skewed to basic and acidic residues. Positions 221-285 (NDETARKAQQ…LKEHEEVANT (65 aa)) form a coiled coil. Polar residues predominate over residues 257 to 267 (DNNGTTQIAQQ). The segment covering 291-300 (NGAAKTTENG) has biased composition (low complexity). The interval 354 to 375 (LSDEWKALCVEERRLNIKKLRF) is non-canonical leucine-zipper.

Belongs to the GeBP family. As to quaternary structure, homo- and heterodimers. Interacts with GEBP, GPL2 and GPL3. Interacts with GEBP. Expressed in the apical meristem and young leaf primordia. Detected in the vascular tissues of cotyledons and leaves, in hydathodes and at the base of flowers and siliques, but not in roots.

It localises to the nucleus. Functionally, probable transcription factor. May play redundant roles with GEBP and GPL2 in cytokinin responses by regulating the transcript levels of type-A ARR response genes. Involved in stress responses. Plays a repressive role in cell expansion by counteracting the positive role of CPR5 in this process, but does not regulate cell proliferation or endoreduplication. This chain is GLABROUS1 enhancer-binding protein-like 1, found in Arabidopsis thaliana (Mouse-ear cress).